The following is a 256-amino-acid chain: uncharacterized protein (256 aa).

A disordered region spans residues 1–23; the sequence is MIPPCENAPHIIYHESQRGTRDR. A compositionally biased stretch (basic and acidic residues) spans 12–23; the sequence is IYHESQRGTRDR.

This is an uncharacterized protein from Homo sapiens (Human).